The following is a 32-amino-acid chain: Ranatuerin-2Lb (32 aa).

An intrachain disulfide couples C27 to C32.

In terms of tissue distribution, expressed by the skin glands.

It is found in the secreted. Functionally, antibacterial activity against Gram-positive bacterium S.aureus and Gram-negative bacterium E.coli. Has activity against C.albicans. This chain is Ranatuerin-2Lb, found in Rana luteiventris (Columbia spotted frog).